The chain runs to 136 residues: Ribosome-binding factor A (136 aa).

The protein belongs to the RbfA family. As to quaternary structure, monomer. Binds 30S ribosomal subunits, but not 50S ribosomal subunits or 70S ribosomes.

It is found in the cytoplasm. Functionally, one of several proteins that assist in the late maturation steps of the functional core of the 30S ribosomal subunit. Associates with free 30S ribosomal subunits (but not with 30S subunits that are part of 70S ribosomes or polysomes). Required for efficient processing of 16S rRNA. May interact with the 5'-terminal helix region of 16S rRNA. The polypeptide is Ribosome-binding factor A (Cellvibrio japonicus (strain Ueda107) (Pseudomonas fluorescens subsp. cellulosa)).